The primary structure comprises 438 residues: UDP-N-acetylglucosamine 1-carboxyvinyltransferase 1 (438 aa).

22–23 (KN) is a binding site for phosphoenolpyruvate. Residue Arg-95 participates in UDP-N-acetyl-alpha-D-glucosamine binding. Catalysis depends on Cys-119, which acts as the Proton donor. At Cys-119 the chain carries 2-(S-cysteinyl)pyruvic acid O-phosphothioketal. UDP-N-acetyl-alpha-D-glucosamine is bound by residues 124-128 (RPIDL), Asp-307, and Val-329.

This sequence belongs to the EPSP synthase family. MurA subfamily.

The protein localises to the cytoplasm. The enzyme catalyses phosphoenolpyruvate + UDP-N-acetyl-alpha-D-glucosamine = UDP-N-acetyl-3-O-(1-carboxyvinyl)-alpha-D-glucosamine + phosphate. It functions in the pathway cell wall biogenesis; peptidoglycan biosynthesis. Functionally, cell wall formation. Adds enolpyruvyl to UDP-N-acetylglucosamine. The protein is UDP-N-acetylglucosamine 1-carboxyvinyltransferase 1 of Lactiplantibacillus plantarum (strain ATCC BAA-793 / NCIMB 8826 / WCFS1) (Lactobacillus plantarum).